The primary structure comprises 719 residues: Probable disease resistance protein At4g14610 (719 aa).

Residues 25 to 73 adopt a coiled-coil conformation; it reads SLPENLAALQKAIEVLKTKHDDVKRRVDKEEFLGRRHRLSQVQVEIERL. The NB-ARC domain maps to 114 to 418; it reads EENLVAQVEE…NELEKILGCP (305 aa). 156-163 lines the ATP pocket; sequence GMGGVGKT. LRR repeat units follow at residues 400–421, 422–444, and 447–469; these read AVRR…PTCP, QLTT…FFRF, and NLVV…ISEV.

It belongs to the disease resistance NB-LRR family.

Functionally, probable disease resistance protein. In Arabidopsis thaliana (Mouse-ear cress), this protein is Probable disease resistance protein At4g14610.